Reading from the N-terminus, the 364-residue chain is Selection and upkeep of intraepithelial T-cells protein 11 (364 aa).

Positions 1 to 28 (MEPSASCLPGFFMVCILLKITVLTQVMS) are cleaved as a signal peptide. Residues 29 to 118 (LDIQINTQIP…TNQEKRRSII (90 aa)) form the Ig-like V-type domain. Over 29 to 138 (LDIQINTQIP…MSLMSNNLLY (110 aa)) the chain is Extracellular. A disulfide bridge links C48 with C102. A helical membrane pass occupies residues 139 to 159 (LGIYLIFILFLNFLKGILFCL). Over 160 to 186 (TKRLVHFRKRMIKIKKVWSNKTRACCP) the chain is Cytoplasmic. Residues 187 to 207 (LIWEFLEIVLFIAFLPLYLMF) traverse the membrane as a helical segment. Topologically, residues 208–230 (RIRVFTLDEAHILYNNWLWKVCK) are extracellular. A helical membrane pass occupies residues 231–251 (TLIAMMILFTVLILFLLWTLN). Over 252–364 (RYGKMPCLSS…LYSKLGNLTH (113 aa)) the chain is Cytoplasmic.

The protein belongs to the SKINT family. As to expression, expressed in skin and thymus.

The protein resides in the membrane. Functionally, may act by engaging a cell surface molecule on immature T-cells in the embryonic thymus. The protein is Selection and upkeep of intraepithelial T-cells protein 11 (Skint11) of Mus musculus (Mouse).